A 612-amino-acid chain; its full sequence is MPEYRSKTSTHGRNMAGARALWRATGMQDGDFQKPIIAIANSFTQFVPGHVHLKDLGQLVAREIERVGGVAKEFDTIAVDDGIAMGHDGMLYSLPSREIIADSVEYMVNAHCADALVCISNCDKITPGMLMAALRLNIPTVFVSGGPMEAGKTALAEHKLDLIDAMVIAADDSASDEKVAEFERSACPTCGSCSGMFTANSMNCLTEALGLSLPGNGTVVATHADREQLFLRAGRVAVELCHRWYGGEDPTALPRGIATFEAFENAMTLDIAMGGSTNTILHLLAAAQEGEVPFGMQDIDRLSKRVPQLCKVAPNTPKYHIEDVHRAGGIMAILGELARGGLLHTTAATVHARTLADAIAHWDVTQTVDENVHTFYKAGPAGIPTQIAFSQATRWDSLDTDRSEGCIRDVAHALSQEGGLAVLYGNIARDGCVVKTAGVDESIHVFEGTARVFESQDAAVKSILADEVKAGDVVVIRYEGPKGGPGMQEMLYPTSYLKSKGLGKQCALLTDGRFSGGTSGLSIGHASPEAAAGGAIGLVRDGDKILIDIPNRGINLLISDEALASRRAEQDAKGWKPVEVRPRKVTTALKAYALLATSADKGAVRDKALLDG.

Mg(2+) is bound at residue D81. [2Fe-2S] cluster is bound at residue C122. The Mg(2+) site is built by D123 and K124. The residue at position 124 (K124) is an N6-carboxylysine. C193 is a [2Fe-2S] cluster binding site. E489 serves as a coordination point for Mg(2+). S515 acts as the Proton acceptor in catalysis.

It belongs to the IlvD/Edd family. As to quaternary structure, homodimer. [2Fe-2S] cluster serves as cofactor. Requires Mg(2+) as cofactor.

The enzyme catalyses (2R)-2,3-dihydroxy-3-methylbutanoate = 3-methyl-2-oxobutanoate + H2O. It catalyses the reaction (2R,3R)-2,3-dihydroxy-3-methylpentanoate = (S)-3-methyl-2-oxopentanoate + H2O. It participates in amino-acid biosynthesis; L-isoleucine biosynthesis; L-isoleucine from 2-oxobutanoate: step 3/4. It functions in the pathway amino-acid biosynthesis; L-valine biosynthesis; L-valine from pyruvate: step 3/4. In terms of biological role, functions in the biosynthesis of branched-chain amino acids. Catalyzes the dehydration of (2R,3R)-2,3-dihydroxy-3-methylpentanoate (2,3-dihydroxy-3-methylvalerate) into 2-oxo-3-methylpentanoate (2-oxo-3-methylvalerate) and of (2R)-2,3-dihydroxy-3-methylbutanoate (2,3-dihydroxyisovalerate) into 2-oxo-3-methylbutanoate (2-oxoisovalerate), the penultimate precursor to L-isoleucine and L-valine, respectively. In Xanthomonas oryzae pv. oryzae (strain MAFF 311018), this protein is Dihydroxy-acid dehydratase.